Reading from the N-terminus, the 188-residue chain is UPF0157 protein VC_A0354 (188 aa).

This sequence belongs to the UPF0157 (GrpB) family.

The protein is UPF0157 protein VC_A0354 of Vibrio cholerae serotype O1 (strain ATCC 39315 / El Tor Inaba N16961).